The sequence spans 308 residues: Zinc finger protein unc-98 (308 aa).

C2H2-type zinc fingers lie at residues 111–133 (YKCR…ERIH) and 139–161 (YVCG…AAQH). Residues 166-186 (GFKCDCGRTFFSYTEMLYHKH) form a C2H2-type 3; degenerate zinc finger. The C2H2-type 4 zinc-finger motif lies at 244–266 (YICEYCSKSYSDSRGLAYHMYSH).

The protein localises to the nucleus. It is found in the cytoplasm. In terms of biological role, probable transcription factor. Required for muscle structure. Its dual subcellular localization suggests that it may function both as a muscle adhesion complex protein and as a transcription factor, or work together with transcription factors, to influence gene expression. Thought to act as a molecular bridge between unc-97 and mhc-a at the M-line of muscles, possibly in a signaling role. This Caenorhabditis briggsae protein is Zinc finger protein unc-98.